The sequence spans 37 residues: Large ribosomal subunit protein bL36 (37 aa).

The protein belongs to the bacterial ribosomal protein bL36 family.

The polypeptide is Large ribosomal subunit protein bL36 (Histophilus somni (strain 129Pt) (Haemophilus somnus)).